The chain runs to 526 residues: Cytochrome P450 monooxygenase 58 (526 aa).

3 consecutive transmembrane segments (helical) span residues 13-33, 115-135, and 306-326; these read IASS…LLLI, FIMA…GYGK, and IGAG…AMTL. Cysteine 451 provides a ligand contact to heme.

It belongs to the cytochrome P450 family. The cofactor is heme.

It localises to the membrane. The protein operates within secondary metabolite biosynthesis. Cytochrome P450 monooxygenase that is able to use delta(6)-protoilludene as a substrate to produce delta(6)-protoilludene-8-ol. The sequence is that of Cytochrome P450 monooxygenase 58 from Postia placenta (strain ATCC 44394 / Madison 698-R) (Brown rot fungus).